The chain runs to 629 residues: Neuronal acetylcholine receptor subunit alpha-4 (629 aa).

The first 30 residues, 1 to 30, serve as a signal peptide directing secretion; that stretch reads MEIGGSGAPPPLLLLPLLLLLGTGLLPASS. Residues 32–249 are Extracellular-facing; the sequence is IETRAHAEER…IIRRLPLFYT (218 aa). A glycan (N-linked (GlcNAc...) asparagine) is linked at asparagine 59. Ca(2+) contacts are provided by valine 78 and glutamate 80. Asparagine 109 and asparagine 176 each carry an N-linked (GlcNAc...) asparagine glycan. 2 cysteine pairs are disulfide-bonded: cysteine 163–cysteine 177 and cysteine 227–cysteine 228. Residues 250–270 form a helical membrane-spanning segment; that stretch reads INLIIPCLLISCLTVLVFYLP. Cysteine 273 is lipidated: S-palmitoyl cysteine. The next 2 membrane-spanning stretches (helical) occupy residues 279-299 and 312-332; these read LCISVLLSLTVFLLLITEIIP and LLFTMIFVTLSIVITVFVLNV. Residues 333-603 are Cytoplasmic-facing; sequence HHRSPRTHTM…KYVAMVIDRI (271 aa). 2 disordered regions span residues 420-459 and 503-529; these read ETQPTCRSPSHKVPDLKTSEVEKASPCPSPGSCHPPNSSG and SLTESKPTGSPASLKTRPSQLPVSDQT. The residue at position 427 (serine 427) is a Phosphoserine. Residues 431–442 are compositionally biased toward basic and acidic residues; it reads KVPDLKTSEVEK. Positions 449–459 are enriched in low complexity; the sequence is PGSCHPPNSSG. Over residues 504–529 the composition is skewed to polar residues; that stretch reads LTESKPTGSPASLKTRPSQLPVSDQT. Phosphoserine occurs at positions 540 and 543. A helical transmembrane segment spans residues 604–624; that stretch reads FLWMFIIVCLLGTVGLFLPPW.

Belongs to the ligand-gated ion channel (TC 1.A.9) family. Acetylcholine receptor (TC 1.A.9.1) subfamily. Alpha-4/CHRNA4 sub-subfamily. Neuronal AChR is composed of two different types of subunits: alpha and beta. CHRNA4 forms heteropentameric neuronal acetylcholine receptors with CHRNB2 and CHRNB4, as well as CHRNA5 and CHRNB3 as accesory subunits. Found in two major stoichiometric forms, LS (low agonist sensitivity): (CHRNA4)3:(CHRNB2)2 and HS (high agonist sensitivity): (CHRNA4)2:(CHRNB2)3, the two stoichiometric forms differ in their unitary conductance, calcium permeability, ACh sensitivity and potentiation by divalent cation. Cells produce predominantly an (CHRNA4)3:(CHRNB2)2 nAChR. The (CHRNA4)2:(CHRNB2)3 expression is selectively up-regulated by nicotine and has lower single channel conductance and calcium permeability. In the striatum, also forms CHRNA4:CHRNA6:CHRNB2 complexes. Also found in the stoichiometric form: (CHRNA4:CHRNB2)2:CHRNB3. Interacts with RIC3; which is required for proper folding and assembly. Interacts with LYPD6.

It is found in the synaptic cell membrane. It localises to the cell membrane. It carries out the reaction K(+)(in) = K(+)(out). The catalysed reaction is Na(+)(in) = Na(+)(out). It catalyses the reaction Ca(2+)(in) = Ca(2+)(out). Activated by a myriad of ligands such as acetylcholine, cytisine, nicotine, choline and epibatidine. Channel potentiation by calcium is stoichiometry-selective, CHRNA4:CHRNB2 nACh receptor is achieved by calcium association with topographically distinct sites framed by anionic residues within the CHRNA4 subunit and between the CHRNA4 and CHRNB2 subunits. nAChR activity is inhibited by the antagonist alpha-conotoxins BuIA, PnIA, GID and MII, small disulfide-constrained peptides from cone snails. In terms of biological role, component of neuronal acetylcholine receptors (nAChRs) that function as pentameric, ligand-gated cation channels with high calcium permeability among other activities. nAChRs are excitatory neurotrasnmitter receptors formed by a collection of nAChR subunits known to mediate synaptic transmission in the nervous system and the neuromuscular junction. Each nAchR subunit confers differential attributes to channel properties, including activation, deactivation and desensitization kinetics, pH sensitivity, cation permeability, and binding to allosteric modulators. CHRNA4 forms heteropentameric neuronal acetylcholine receptors with CHRNB2 and CHRNB4, as well as CHRNA5 and CHRNB3 as accesory subunits. Is the most abundant nAChR subtype expressed in the central nervous system. Found in two major stoichiometric forms,(CHRNA4)3:(CHRNB2)2 and (CHRNA4)2:(CHRNB2)3, the two stoichiometric forms differ in their unitary conductance, calcium permeability, ACh sensitivity and potentiation by divalent cation. Involved in the modulation of calcium-dependent signaling pathways, influences the release of neurotransmitters, including dopamine, glutamate and GABA. The polypeptide is Neuronal acetylcholine receptor subunit alpha-4 (Chrna4) (Mus musculus (Mouse)).